The following is a 237-amino-acid chain: Uridylate kinase (237 aa).

An ATP-binding site is contributed by 11–14; the sequence is KLSG. Residue Gly53 participates in UMP binding. Residues Gly54 and Arg58 each coordinate ATP. Residues Asp73 and 134-141 each bind UMP; that span reads TGNPFFTT. ATP contacts are provided by Thr161, Tyr167, and Asp170.

It belongs to the UMP kinase family. Homohexamer.

It is found in the cytoplasm. The catalysed reaction is UMP + ATP = UDP + ADP. It functions in the pathway pyrimidine metabolism; CTP biosynthesis via de novo pathway; UDP from UMP (UMPK route): step 1/1. Its activity is regulated as follows. Inhibited by UTP. Catalyzes the reversible phosphorylation of UMP to UDP. In Burkholderia cenocepacia (strain HI2424), this protein is Uridylate kinase.